The primary structure comprises 620 residues: Transcription factor GTE11 (620 aa).

Residues 1–35 form a disordered region; sequence MTVRNGGFPGDYNRNSFDSPGGCDDSPNASKDDET. Residues 124–230 form the Bromo domain; that stretch reads TSTMLRMKQC…KFFEVRWKTI (107 aa). The NET domain occupies 270–351; sequence NSLLEPAKRV…EFLRENQKKD (82 aa). Serine 417 is subject to Phosphoserine. Residues 445-620 are transcription activation domain; sequence EKRYRAALLK…GNEVEEGEID (176 aa). The stretch at 470–544 forms a coiled coil; it reads NQNEKRDPET…MEKSVEINEN (75 aa). Disordered regions lie at residues 491 to 511 and 597 to 620; these read KKKEKARLQAEAKEAEEARRK and EDEDESDMLAFPDPGNEVEEGEID.

As to quaternary structure, interacts with BT1, BT2 and BT4.

It is found in the nucleus. The polypeptide is Transcription factor GTE11 (GTE11) (Arabidopsis thaliana (Mouse-ear cress)).